The chain runs to 188 residues: Phosphoribosylglycinamide formyltransferase (188 aa).

12 to 14 contacts N(1)-(5-phospho-beta-D-ribosyl)glycinamide; the sequence is GSN. Residues lysine 66, 91–94, and asparagine 108 each bind (6R)-10-formyltetrahydrofolate; that span reads MRLI. The Proton donor role is filled by histidine 110.

The protein belongs to the GART family.

It catalyses the reaction N(1)-(5-phospho-beta-D-ribosyl)glycinamide + (6R)-10-formyltetrahydrofolate = N(2)-formyl-N(1)-(5-phospho-beta-D-ribosyl)glycinamide + (6S)-5,6,7,8-tetrahydrofolate + H(+). Its pathway is purine metabolism; IMP biosynthesis via de novo pathway; N(2)-formyl-N(1)-(5-phospho-D-ribosyl)glycinamide from N(1)-(5-phospho-D-ribosyl)glycinamide (10-formyl THF route): step 1/1. In terms of biological role, catalyzes the transfer of a formyl group from 10-formyltetrahydrofolate to 5-phospho-ribosyl-glycinamide (GAR), producing 5-phospho-ribosyl-N-formylglycinamide (FGAR) and tetrahydrofolate. The polypeptide is Phosphoribosylglycinamide formyltransferase (Staphylococcus aureus (strain MRSA252)).